A 310-amino-acid chain; its full sequence is MPRLSEPSPYVEFDRKQWRALRKSTPLVLTEEELIGLRGLGEQIDLTEVAEVYLPLARLIHLQVAARQRLFAATATFLGDQHPDRLVPFVIGVAGSVAVGKSTTARVLQALLARWDHHPRVDLVTTDGFLYPNAELSRRNIMHRKGFPESYNRRGLLRFVTEVKSGAREVTAPVYSHLLYDIIKNEKHVVQQPDILILEGLNVLQTGPTLMVSDLFDFSIYVDARIEDIEQWYISRFLAMRSTSFANPSSHFHHYAKLSDKQATLAAQEIWHSINLPNLLENILPTRPRATLVLRKDADHSINRLRLRKL.

95-102 (GSVAVGKS) lines the ATP pocket.

The protein belongs to the prokaryotic pantothenate kinase family.

The protein resides in the cytoplasm. It catalyses the reaction (R)-pantothenate + ATP = (R)-4'-phosphopantothenate + ADP + H(+). The protein operates within cofactor biosynthesis; coenzyme A biosynthesis; CoA from (R)-pantothenate: step 1/5. In Mycobacteroides abscessus (strain ATCC 19977 / DSM 44196 / CCUG 20993 / CIP 104536 / JCM 13569 / NCTC 13031 / TMC 1543 / L948) (Mycobacterium abscessus), this protein is Pantothenate kinase.